Here is a 164-residue protein sequence, read N- to C-terminus: CASP-like protein 1C1 (164 aa).

Residues 1-15 (MGDVEIPPLVKQIVR) lie on the Cytoplasmic side of the membrane. Residues 16–36 (GLRGLAFLATILATSFMAASH) form a helical membrane-spanning segment. The Extracellular segment spans residues 37-56 (ERAIFPFDYKADYTDLMLFK). The chain crosses the membrane as a helical span at residues 57–77 (AFLGANIAASLYSFFFVCLPP). Over 78-83 (KSLLWR) the chain is Cytoplasmic. Residues 84 to 104 (LAIVLDVIMFGLLVAMDSAAI) form a helical membrane-spanning segment. Residues 105-132 (AAAYLHKHGDSQAFWPPICSQVPTYCYR) lie on the Extracellular side of the membrane. The chain crosses the membrane as a helical span at residues 133–153 (VILAISIGFGGVFMFLLIIII). At 154-164 (SISVILNPLLV) the chain is on the cytoplasmic side.

The protein belongs to the Casparian strip membrane proteins (CASP) family. In terms of assembly, homodimer and heterodimers.

Its subcellular location is the cell membrane. The sequence is that of CASP-like protein 1C1 from Populus trichocarpa (Western balsam poplar).